A 1003-amino-acid polypeptide reads, in one-letter code: Pumilio homolog 4 (1003 aa).

The tract at residues 38 to 65 (QHRNQQSFGRERERDIDVHRSGSAPPTV) is disordered. The span at 46-57 (GRERERDIDVHR) shows a compositional bias: basic and acidic residues. Ser225 carries the post-translational modification Phosphoserine. Positions 285–300 (KNSPNTMLGSTMSSPV) are enriched in polar residues. The tract at residues 285–328 (KNSPNTMLGSTMSSPVPRNRTPDSHLVGRSTASGLPPIGTRVGP) is disordered. Residue Thr305 is modified to Phosphothreonine. In terms of domain architecture, PUM-HD spans 644–984 (AEASLLEGFK…HIVARVEKLI (341 aa)). Pumilio repeat units lie at residues 664–699 (EIVGHVIEFSMDQYGSRFIQQKLETATDEEKNAIFP), 700–735 (EILPYGRTLMTDVFGNYVIQKFFEHGTTKQRKELAE), 736–771 (QVTGHVLALSLQMYGCRVIQKALEVVELEQQARMVK), 772–807 (ELDGSVMKCVHDQNGNHVIQKCIERLPQDWIQFIIS), 808–843 (SFYGKVLALSTHPYGCRVIQRVLEHIDDIETQRIIM), 845–880 (EIMDSVCTLAQDQYGNYVIQHIIQHGKPHERSEIIN), 881–916 (KLAGQIVKMSQQKFASNVVEKCLTFGGPEERQVLVN), and 917–958 (EMLG…LILS).

The protein resides in the cytoplasm. Sequence-specific RNA-binding protein that regulates translation and mRNA stability by binding the 3'-UTR of target mRNAs. Binds the APUM-binding elements (APBEs) in the 3'-UTR mRNA sequence of CLV1, PNH, WUS and FAS2. The sequence is that of Pumilio homolog 4 (APUM4) from Arabidopsis thaliana (Mouse-ear cress).